Reading from the N-terminus, the 147-residue chain is Probable disulfide formation protein (147 aa).

Residues 9–28 (NYSLYFAWLTALIATLGSLY) traverse the membrane as a helical segment. Cys-38 and Cys-41 are oxidised to a cystine. 2 helical membrane-spanning segments follow: residues 43 to 62 (YQRV…AYRT) and 69 to 86 (YALP…YQYL). The cysteines at positions 99 and 106 are disulfide-linked. A helical transmembrane segment spans residues 115-138 (GFITLPFLGMLATLIMSFFLIMAF).

This sequence belongs to the DsbB family. BdbC subfamily.

The protein resides in the cell inner membrane. Functionally, required for disulfide bond formation in some proteins. The polypeptide is Probable disulfide formation protein (Coxiella burnetii (strain CbuG_Q212) (Coxiella burnetii (strain Q212))).